Consider the following 79-residue polypeptide: Sigma-O factor regulatory protein RsoA (79 aa).

In terms of biological role, together with RNA polymerase sigma factor SigO, positively regulates the expression of at least three operons, including oxdC-yvrL, sigO-rsoA and yvrJ. Required for the acid stress-dependent induction of the oxalate decarboxylase oxdC. This Bacillus subtilis (strain 168) protein is Sigma-O factor regulatory protein RsoA (rsoA).